Reading from the N-terminus, the 493-residue chain is Galactose-1-phosphate uridylyltransferase (493 aa).

The protein belongs to the galactose-1-phosphate uridylyltransferase type 2 family.

The protein resides in the cytoplasm. The enzyme catalyses alpha-D-galactose 1-phosphate + UDP-alpha-D-glucose = alpha-D-glucose 1-phosphate + UDP-alpha-D-galactose. It functions in the pathway carbohydrate metabolism; galactose metabolism. In Streptococcus pneumoniae serotype 19F (strain G54), this protein is Galactose-1-phosphate uridylyltransferase.